The chain runs to 204 residues: MSRGALIVFEGLDKSGKTTQCMNIMESIPSNTIKYLNFPQRSTVTGKMIDDYLTRKKTYNDHIVNLLFCANRWEFASFIQEQLEQGITLIVDRYAFSGVAYAAAKGASMTLSKSYESGLPKPDLVIFLESGSKEINRNVGEEIYEDVAFQQKVLQEYKKMIEEGDIHWQIISSEFEEDVKKELIKNIVIEAIHTVTGPVGQLWM.

11-18 lines the ATP pocket; the sequence is GLDKSGKT.

Belongs to the thymidylate kinase family.

The enzyme catalyses dTMP + ATP = dTDP + ADP. Its pathway is pyrimidine metabolism; dTTP biosynthesis. This Bos taurus (Bovine) protein is Thymidylate kinase (TMK).